The following is a 362-amino-acid chain: Probable cinnamyl alcohol dehydrogenase 9 (362 aa).

Cysteine 45 contacts Zn(2+). NADP(+) is bound at residue serine 47. 7 residues coordinate Zn(2+): histidine 67, glutamate 68, cysteine 98, cysteine 101, cysteine 104, cysteine 112, and cysteine 167. Residues threonine 171, 192–197 (GLGGLG), 215–220 (STSPWK), threonine 255, glycine 279, and 302–304 (SMI) contribute to the NADP(+) site.

It belongs to the zinc-containing alcohol dehydrogenase family. As to quaternary structure, homodimer. Zn(2+) serves as cofactor.

The catalysed reaction is (E)-cinnamyl alcohol + NADP(+) = (E)-cinnamaldehyde + NADPH + H(+). It carries out the reaction (E)-coniferol + NADP(+) = (E)-coniferaldehyde + NADPH + H(+). The enzyme catalyses (E)-sinapyl alcohol + NADP(+) = (E)-sinapaldehyde + NADPH + H(+). It catalyses the reaction (E)-4-coumaroyl alcohol + NADP(+) = (E)-4-coumaraldehyde + NADPH + H(+). The catalysed reaction is (E)-caffeyl alcohol + NADP(+) = (E)-caffeyl aldehyde + NADPH + H(+). Its pathway is aromatic compound metabolism; phenylpropanoid biosynthesis. Functionally, involved in lignin biosynthesis. Catalyzes the final step specific for the production of lignin monomers. Catalyzes the NADPH-dependent reduction of coniferaldehyde, 5-hydroxyconiferaldehyde, sinapaldehyde, 4-coumaraldehyde and caffeyl aldehyde to their respective alcohols. This is Probable cinnamyl alcohol dehydrogenase 9 from Oryza sativa subsp. japonica (Rice).